The following is a 551-amino-acid chain: Dol-P-Man:Man(7)GlcNAc(2)-PP-Dol alpha-1,6-mannosyltransferase (551 aa).

The Lumenal segment spans residues 1-2 (MR). The chain crosses the membrane as a helical span at residues 3–23 (WSVLDTVLLTVISFHLIQAPF). Residues 24–61 (TKVEESFNIQAIHDILTYSVFDISQYDHLKFPGVVPRT) are Cytoplasmic-facing. Residues 62–82 (FVGAVIIAMLSRPYLYLSSLI) traverse the membrane as a helical segment. The Lumenal segment spans residues 83-89 (QTSRPTS). The helical transmembrane segment at 90 to 110 (IDVQLVVRGIVGLTNGLSFIY) threads the bilayer. Topologically, residues 111-136 (LKNCLQDMFDEITEKKKEENEDKDIY) are cytoplasmic. The chain crosses the membrane as a helical span at residues 137–157 (IYDSAGTWFLLFLIGSFHLMF). Residues 158-178 (YSTRTLPNFVMTLPLTNVALG) are Lumenal-facing. The chain crosses the membrane as a helical span at residues 179–199 (WVLLGRYNAAIFLSALVAIVF). Residues 200-202 (RLE) are Cytoplasmic-facing. A helical transmembrane segment spans residues 203–223 (VSALSAGIALFSVIFKKISLF). The Lumenal portion of the chain corresponds to 224 to 227 (DAIK). A helical transmembrane segment spans residues 228 to 248 (FGIFGLGLGSAISITVDSYFW). Residues 249 to 275 (QEWCLPEVDGFLFNVVAGYASKWGVEP) lie on the Cytoplasmic side of the membrane. The helical transmembrane segment at 276–296 (VTAYFTHYLRMMFMPPTVLLL) threads the bilayer. The Lumenal segment spans residues 297–303 (NYFGYKL). Residues 304 to 324 (APAKLKIVSLASLFHIIVLSF) traverse the membrane as a helical segment. The Cytoplasmic portion of the chain corresponds to 325 to 331 (QPHKEWR). A helical membrane pass occupies residues 332–352 (FIIYAVPSIMLLGATGAAHLW). The Lumenal segment spans residues 353 to 365 (ENMKVKKITNVLC). The helical transmembrane segment at 366–386 (LAILPLSIMTSFFISMAFLYI) threads the bilayer. Residues 387–417 (SRMNYPGGEALTSFNDMIVEKNITNATVHIS) lie on the Cytoplasmic side of the membrane. A helical transmembrane segment spans residues 418 to 438 (IPPCMTGVTLFGELNYGVYGI). Topologically, residues 439-551 (NYDKTENTTL…KRIKQDEKTD (113 aa)) are lumenal.

It belongs to the glycosyltransferase 22 family.

Its subcellular location is the endoplasmic reticulum membrane. It carries out the reaction an alpha-D-Man-(1-&gt;2)-alpha-D-Man-(1-&gt;2)-alpha-D-Man-(1-&gt;3)-[alpha-D-Man-(1-&gt;2)-alpha-D-Man-(1-&gt;3)-alpha-D-Man-(1-&gt;6)]-beta-D-Man-(1-&gt;4)-beta-D-GlcNAc-(1-&gt;4)-alpha-D-GlcNAc-diphospho-di-trans,poly-cis-dolichol + a di-trans,poly-cis-dolichyl beta-D-mannosyl phosphate = an alpha-D-Man-(1-&gt;2)-alpha-D-Man-(1-&gt;2)-alpha-D-Man-(1-&gt;3)-[alpha-D-Man-(1-&gt;2)-alpha-D-Man-(1-&gt;3)-[alpha-D-Man-(1-&gt;6)]-alpha-D-Man-(1-&gt;6)]-beta-D-Man-(1-&gt;4)-beta-D-GlcNAc-(1-&gt;4)-alpha-D-GlcNAc-diphospho-di-trans,poly-cis-dolichol + a di-trans,poly-cis-dolichyl phosphate + H(+). The protein operates within protein modification; protein glycosylation. Mannosyltransferase that operates in the biosynthetic pathway of dolichol-linked oligosaccharides, the glycan precursors employed in protein asparagine (N)-glycosylation. The assembly of dolichol-linked oligosaccharides begins on the cytosolic side of the endoplasmic reticulum membrane and finishes in its lumen. The sequential addition of sugars to dolichol pyrophosphate produces dolichol-linked oligosaccharides containing fourteen sugars, including two GlcNAcs, nine mannoses and three glucoses. Once assembled, the oligosaccharide is transferred from the lipid to nascent proteins by oligosaccharyltransferases. In the lumen of the endoplasmic reticulum, adds the eighth mannose residue in an alpha-1,6 linkage onto Man(7)GlcNAc(2)-PP-dolichol to produce Man(8)GlcNAc(2)-PP-dolichol. This Saccharomyces cerevisiae (strain ATCC 204508 / S288c) (Baker's yeast) protein is Dol-P-Man:Man(7)GlcNAc(2)-PP-Dol alpha-1,6-mannosyltransferase (ALG12).